The chain runs to 184 residues: Large ribosomal subunit protein uL18 (184 aa).

This sequence belongs to the universal ribosomal protein uL18 family. As to quaternary structure, part of the 50S ribosomal subunit. Contacts the 5S and 23S rRNAs.

Functionally, this is one of the proteins that bind and probably mediate the attachment of the 5S RNA into the large ribosomal subunit, where it forms part of the central protuberance. In Haloferax volcanii (strain ATCC 29605 / DSM 3757 / JCM 8879 / NBRC 14742 / NCIMB 2012 / VKM B-1768 / DS2) (Halobacterium volcanii), this protein is Large ribosomal subunit protein uL18 (rpl18).